Reading from the N-terminus, the 1985-residue chain is Histone-lysine N-methyltransferase SETD1B (1985 aa).

Over residues 1 to 11 (MENSHPHHHHQ) the composition is skewed to basic residues. The interval 1 to 25 (MENSHPHHHHQQPPPQPGPSGERRN) is disordered. The interaction with WDR82 stretch occupies residues 67–97 (VEDPRVVGIWTKNKELELSVPKFKIDEFYVG). The region spanning 92–180 (DEFYVGPVPP…NIIHVELDTK (89 aa)) is the RRM domain. 5 disordered regions span residues 234-304 (GCGS…QDPT), 353-710 (GSSG…PPPA), 955-1480 (VKRK…RTGP), 1519-1624 (QLPP…STKL), and 1658-1687 (RGPWRRPPKKRHEDLVAPSASPEPSPPQPL). Polar residues-rich tracts occupy residues 242–258 (VTPNSGGTPFSQDTAYS), 264–273 (TPNSYGQGTP), 281–304 (PFSQDSSYSSRQPTPSYLFSQDPT), and 353–365 (GSSGTPFKAQSQD). The span at 366-381 (ATTFAHTPPPAQTATA) shows a compositional bias: low complexity. 3 stretches are compositionally biased toward pro residues: residues 393 to 404 (TPAPPFPPPPEE), 423 to 433 (PAPPPLPPAEP), and 440 to 449 (GTPPGPPPPD). The segment covering 484–512 (EKPHDSLDSRIEMLLKEQRTKLPFLREQD) has biased composition (basic and acidic residues). The segment covering 522-535 (SPISSSSSQLSPLS) has biased composition (low complexity). Pro residues predominate over residues 583 to 594 (PRPPPEPGPPDP). Positions 628–637 (EDMEISDDEM) are enriched in acidic residues. Low complexity predominate over residues 650–669 (PMVVTPGAGAVAAPNVLAPN). Over residues 670–710 (LPLPPPPGFPPLPPPPPPPPPQPGFPMPPPLPPPPPPPPPA) the composition is skewed to pro residues. Phosphoserine occurs at positions 977 and 985. Positions 986–1006 (ERERDRDIADAPCELTKRDPK) are enriched in basic and acidic residues. Ser-1022 is modified (phosphoserine). A compositionally biased stretch (low complexity) spans 1032–1055 (LSASSSSSASSSSGSSTTSPSSSA). The segment covering 1058-1083 (KEEEDRESTEEEEEEEEEEAEEEEEE) has biased composition (acidic residues). The segment covering 1087–1097 (SRISSPSSSSS) has biased composition (low complexity). Positions 1100–1120 (KDDEDDNEADSDGQIDSDIDD) are enriched in acidic residues. Positions 1143–1178 (SITTSKAPAESSSSSSESSGSSEFESSSESESSSSS) are enriched in low complexity. Acidic residues predominate over residues 1179–1202 (SEDEEEMTVPGVEEEEEEEEEEEK). The segment covering 1205 to 1217 (AMAAATVVAMAEE) has biased composition (low complexity). A compositionally biased stretch (acidic residues) spans 1247 to 1261 (GTEEEVDIEAEDEVP). Ser-1283, Ser-1301, and Ser-1354 each carry phosphoserine. Pro residues predominate over residues 1331–1373 (EPPPMLSLPLQPPLPPPRLLRPPSPPPEPETPEPPKPPVPLEP). A compositionally biased stretch (low complexity) spans 1402–1442 (PGGEPPLSGSSSGLSLSSPQVPGSPFSYPSPSPGLSSGGLP). The span at 1535 to 1544 (IKRKPGRPRR) shows a compositional bias: basic residues. Pro residues-rich tracts occupy residues 1600-1619 (PAPPPPLPPQPPPPPPPPPV) and 1678-1687 (SPEPSPPQPL). A phosphoserine mark is found at Ser-1678 and Ser-1682. The WDR5 interaction motif (WIN) signature appears at 1764-1769 (GCARSE). The interval 1786–1819 (SRASTDEPPMDTQGMSIPAQPHASTRAGSERRSE) is disordered. The short motif at 1817–1822 (RSEQRR) is the RxxxRR motif element. One can recognise an SET domain in the interval 1846–1963 (KKLKFCKSHI…VNEEITYDYK (118 aa)). S-adenosyl-L-methionine is bound at residue Tyr-1962. One can recognise a Post-SET domain in the interval 1969-1985 (VKIPCLCGSENCRGTLN).

It belongs to the class V-like SAM-binding methyltransferase superfamily. Component of the SET1B/COMPASS complex composed of the catalytic subunit SETD1B, WDR5, WDR82, RBBP5, ASH2L/ASH2, CXXC1/CFP1, HCFC1, DPY30 homotrimer and BOD1. Forms a core complex with the evolutionary conserved subcomplex WRAD composed of WDR5, RBBP5, ASH2L/ASH2 and DPY30 subunits; WRAD differentially stimulates the methyltransferase activity. Interacts with HCFC1 and ASH2L/ASH2. Interacts (via the RRM domain) with WDR82. Interacts (via the RRM domain) with hyperphosphorylated C-terminal domain (CTD) of RNA polymerase II large subunit (POLR2A) only in the presence of WDR82. Binds specifically to CTD heptad repeats phosphorylated on 'Ser-5' of each heptad. Interacts with RBM15. Interacts (via WIN motif) with WDR5. In terms of tissue distribution, widely expressed.

It is found in the nucleus. The protein localises to the nucleus speckle. The protein resides in the chromosome. Its subcellular location is the cytoplasm. It carries out the reaction L-lysyl(4)-[histone H3] + S-adenosyl-L-methionine = N(6)-methyl-L-lysyl(4)-[histone H3] + S-adenosyl-L-homocysteine + H(+). The enzyme catalyses N(6)-methyl-L-lysyl(4)-[histone H3] + S-adenosyl-L-methionine = N(6),N(6)-dimethyl-L-lysyl(4)-[histone H3] + S-adenosyl-L-homocysteine + H(+). The catalysed reaction is N(6),N(6)-dimethyl-L-lysyl(4)-[histone H3] + S-adenosyl-L-methionine = N(6),N(6),N(6)-trimethyl-L-lysyl(4)-[histone H3] + S-adenosyl-L-homocysteine + H(+). In terms of biological role, histone methyltransferase that catalyzes methyl group transfer from S-adenosyl-L-methionine to the epsilon-amino group of 'Lys-4' of histone H3 (H3K4) via a non-processive mechanism. Part of chromatin remodeling machinery, forms H3K4me1, H3K4me2 and H3K4me3 methylation marks at active chromatin sites where transcription and DNA repair take place. Plays an essential role in regulating the transcriptional programming of multipotent hematopoietic progenitor cells and lymphoid lineage specification during hematopoiesis. This is Histone-lysine N-methyltransferase SETD1B (Setd1b) from Mus musculus (Mouse).